The sequence spans 423 residues: Zinc finger protein Gfi-1 (423 aa).

The interval Met-1–Ser-20 is SNAG domain. Residues Met-1–Ser-102 form a disordered region. Ser-20 and Ser-57 each carry phosphoserine. Basic and acidic residues predominate over residues Ser-48 to Ser-57. The segment at Arg-141–Cys-258 is required for interaction with RELA. C2H2-type zinc fingers lie at residues Tyr-256 to His-279, Phe-285 to His-307, Phe-313 to His-335, Tyr-341 to His-363, His-369 to His-391, and Phe-397 to His-420.

As to quaternary structure, interacts with U2AF1L4. Component of RCOR-GFI-KDM1A-HDAC complexes. Interacts directly with RCOR1, KDM1A and HDAC2. Also interacts with HDAC1. regions. Interacts (via the zinc-finger domain) with ARIH2; the interaction prevents GFI1 ubiquitination and proteasomal degradation. Interacts with PIAS3; the interaction relieves the inhibitory effect of PIAS3 on STAT3-mediated transcriptional activity. Forms a complex with EHMT2 and HDAC1 to promote 'Lys-9' dimethylation of H3 (H3K9Me2) and repress expression of target genes. Interacts directly with EHMT2. Component of the GFI1-AJUBA-HDAC1 repressor complex. Interacts directly with AJUBA (via ITS LIM domains); the interaction results in the HDAC-dependent corepression of a subset of GFI1 target genes and, occurs independent of the SNAG domain. Interacts with SPI1; the interaction inhibits SPI1 transcriptional activity targeted at macrophage-specific genes, repressing macrophage differentiation of myeloid progenitor cells and promoting granulocyte commitment. Interacts with RUNX1T1; the interaction represses HDAC-mediated transcriptional activity. Interacts with RELA; the interaction occurs on liposaccharide (LPS) stimulation controls RELA DNA binding activity and regulates endotoxin-mediated TOLL-like receptor inflammatory response. Interacts (via the C-terminal zinc fingers) with ZBTB17; the interaction results in the recruitment of GFI1 to the CDKN1A/p21 promoter and repression of CDKN1A/p21 transcription. Ubiquitinated. Restricted to lymphoid tissues and testes in adult animals.

The protein localises to the nucleus. Functionally, transcription repressor essential for hematopoiesis. Functions in a cell-context and development-specific manner. Binds to 5'-TAAATCAC[AT]GCA-3' in the promoter region of a large number of genes. Component of several complexes, including the EHMT2-GFI1-HDAC1, AJUBA-GFI1-HDAC1 and RCOR-GFI-KDM1A-HDAC complexes, that suppress, via histone deacetylase (HDAC) recruitment, a number of genes implicated in multilineage blood cell development. Regulates neutrophil differentiation, promotes proliferation of lymphoid cells, and is required for granulocyte development. Inhibits SPI1 transcriptional activity at macrophage-specific genes, repressing macrophage differentiation of myeloid progenitor cells and promoting granulocyte commitment. Mediates, together with U2AF1L4, the alternative splicing of CD45 and controls T-cell receptor signaling. Regulates the endotoxin-mediated Toll-like receptor (TLR) inflammatory response by antagonizing RELA. Cooperates with CBFA2T2 to regulate ITGB1-dependent neurite growth. Controls cell-cycle progression by repressing CDKNIA/p21 transcription in response to TGFB1 via recruitment of GFI1 by ZBTB17 to the CDKNIA/p21 and CDKNIB promoters. Required for the maintenance of inner ear hair cells. In addition to its role in transcription, acts as a substrate adapter for PRMT1 in the DNA damage response: facilitates the recognition of TP53BP1 and MRE11 substrates by PRMT1, promoting their methylation and the DNA damage response. This chain is Zinc finger protein Gfi-1 (Gfi1), found in Rattus norvegicus (Rat).